The chain runs to 487 residues: Glutamyl-tRNA(Gln) amidotransferase subunit A (487 aa).

Catalysis depends on charge relay system residues lysine 77 and serine 152. Catalysis depends on serine 176, which acts as the Acyl-ester intermediate.

Belongs to the amidase family. GatA subfamily. As to quaternary structure, heterotrimer of A, B and C subunits.

The enzyme catalyses L-glutamyl-tRNA(Gln) + L-glutamine + ATP + H2O = L-glutaminyl-tRNA(Gln) + L-glutamate + ADP + phosphate + H(+). Functionally, allows the formation of correctly charged Gln-tRNA(Gln) through the transamidation of misacylated Glu-tRNA(Gln) in organisms which lack glutaminyl-tRNA synthetase. The reaction takes place in the presence of glutamine and ATP through an activated gamma-phospho-Glu-tRNA(Gln). The sequence is that of Glutamyl-tRNA(Gln) amidotransferase subunit A from Ligilactobacillus salivarius (strain UCC118) (Lactobacillus salivarius).